A 350-amino-acid chain; its full sequence is Hydroxymethylglutaryl-CoA synthase (350 aa).

Asp-30 is a binding site for (3S)-3-hydroxy-3-methylglutaryl-CoA. Glu-82 functions as the Proton donor/acceptor in the catalytic mechanism. Cys-114, Ser-155, Thr-203, and His-236 together coordinate (3S)-3-hydroxy-3-methylglutaryl-CoA. The active-site Acyl-thioester intermediate is the Cys-114. The Proton donor/acceptor role is filled by His-236. Arg-241 contributes to the CoA binding site. Positions 245, 268, and 298 each coordinate (3S)-3-hydroxy-3-methylglutaryl-CoA.

The protein belongs to the thiolase-like superfamily. Archaeal HMG-CoA synthase family. As to quaternary structure, interacts with acetoacetyl-CoA thiolase that catalyzes the precedent step in the pathway and with a DUF35 protein. The acetoacetyl-CoA thiolase/HMG-CoA synthase complex channels the intermediate via a fused CoA-binding site, which allows for efficient coupling of the endergonic thiolase reaction with the exergonic HMGCS reaction.

It catalyses the reaction acetoacetyl-CoA + acetyl-CoA + H2O = (3S)-3-hydroxy-3-methylglutaryl-CoA + CoA + H(+). The protein operates within metabolic intermediate biosynthesis; (R)-mevalonate biosynthesis; (R)-mevalonate from acetyl-CoA: step 2/3. In terms of biological role, catalyzes the condensation of acetyl-CoA with acetoacetyl-CoA to form 3-hydroxy-3-methylglutaryl-CoA (HMG-CoA). Functions in the mevalonate (MVA) pathway leading to isopentenyl diphosphate (IPP), a key precursor for the biosynthesis of isoprenoid compounds that are building blocks of archaeal membrane lipids. The sequence is that of Hydroxymethylglutaryl-CoA synthase from Pyrobaculum calidifontis (strain DSM 21063 / JCM 11548 / VA1).